The chain runs to 313 residues: Cytochrome c biogenesis protein CcsA (313 aa).

The next 8 helical transmembrane spans lie at 9–29 (ILTHISFSIVSIVITIHLITL), 44–64 (GIIVTFFCITGLLVTRWISSG), 71–91 (LYESLIFLSWSFSLIHIIPYF), 101–121 (IIGPSAIFTQGFATSGILTEI), 143–163 (MILGYAALLCGSLLSVALLVI), 217–237 (VISLGFTFLTIGILSGAVWAN), 244–264 (WNWDPKETWAFITWIVFAIYL), and 278–298 (AIVASIGFLIIWICYFGVNLL).

Belongs to the CcmF/CycK/Ccl1/NrfE/CcsA family. As to quaternary structure, may interact with Ccs1.

Its subcellular location is the plastid. The protein resides in the chloroplast thylakoid membrane. Required during biogenesis of c-type cytochromes (cytochrome c6 and cytochrome f) at the step of heme attachment. The sequence is that of Cytochrome c biogenesis protein CcsA from Nicotiana tomentosiformis (Tobacco).